Consider the following 874-residue polypeptide: Probable inorganic carbon transporter subunit DabA (874 aa).

Residues cysteine 398, aspartate 400, histidine 580, and cysteine 595 each contribute to the Zn(2+) site.

The protein belongs to the inorganic carbon transporter (TC 9.A.2) DabA family. As to quaternary structure, forms a complex with DabB. Requires Zn(2+) as cofactor.

The protein localises to the cell membrane. Part of an energy-coupled inorganic carbon pump. The chain is Probable inorganic carbon transporter subunit DabA from Bacillus thuringiensis subsp. konkukian (strain 97-27).